We begin with the raw amino-acid sequence, 164 residues long: Glutamate uptake regulatory protein (164 aa).

In terms of domain architecture, HTH asnC-type spans 5–66; the sequence is LDDFDIKILD…LLDPQKIGLG (62 aa). The segment at residues 24–43 is a DNA-binding region (H-T-H motif); it reads MAELSEKTGLSANACWRRIR.

In terms of biological role, represses the secondary, H(+)-coupled glutamate uptake system (Gluemp) genes. The protein is Glutamate uptake regulatory protein (grp) of Zymomonas mobilis subsp. mobilis (strain ATCC 31821 / ZM4 / CP4).